The sequence spans 636 residues: 1-deoxy-D-xylulose-5-phosphate synthase (636 aa).

Residues His-72 and 113 to 115 contribute to the thiamine diphosphate site; that span reads GHA. Asp-144 provides a ligand contact to Mg(2+). Thiamine diphosphate-binding positions include 145-146, Asn-174, Tyr-287, and Glu-370; that span reads GA. Asn-174 is a Mg(2+) binding site.

It belongs to the transketolase family. DXPS subfamily. In terms of assembly, homodimer. It depends on Mg(2+) as a cofactor. The cofactor is thiamine diphosphate.

The catalysed reaction is D-glyceraldehyde 3-phosphate + pyruvate + H(+) = 1-deoxy-D-xylulose 5-phosphate + CO2. It participates in metabolic intermediate biosynthesis; 1-deoxy-D-xylulose 5-phosphate biosynthesis; 1-deoxy-D-xylulose 5-phosphate from D-glyceraldehyde 3-phosphate and pyruvate: step 1/1. In terms of biological role, catalyzes the acyloin condensation reaction between C atoms 2 and 3 of pyruvate and glyceraldehyde 3-phosphate to yield 1-deoxy-D-xylulose-5-phosphate (DXP). The sequence is that of 1-deoxy-D-xylulose-5-phosphate synthase from Rippkaea orientalis (strain PCC 8801 / RF-1) (Cyanothece sp. (strain PCC 8801)).